The primary structure comprises 74 residues: Antimicrobial peptide 2 (74 aa).

A signal peptide spans 1–22; sequence MEIKYLLTVFLVLLIVSDHCQA. At Lys-40 the chain carries Lysine amide. The propeptide occupies 46 to 74; that stretch reads DLDGQIDRSRNFRKRDAELEELLSKLPIY.

Expressed by the venom gland.

The protein resides in the secreted. It is found in the target cell membrane. Has antibacterial activity against the Gram-positive bacteria S.aureus (MIC=48 uM), the Gram-negative bacteria E.coli (MIC=120 uM), and the yeast C.albicans (MIC=64 uM). Causes hemolysis on horse erythrocytes. This Androctonus amoreuxi (African fattail scorpion) protein is Antimicrobial peptide 2.